Here is a 204-residue protein sequence, read N- to C-terminus: Tic20 family protein Ycf60 (204 aa).

4 helical membrane-spanning segments follow: residues 5–25 (LPSL…SFII), 87–107 (LMPL…IFFI), 133–153 (ILLF…PIEF), and 159–179 (GLMM…YSII).

It belongs to the Tic20 family.

The protein localises to the plastid. Its subcellular location is the chloroplast membrane. The chain is Tic20 family protein Ycf60 (ycf60) from Gracilaria tenuistipitata var. liui (Red alga).